We begin with the raw amino-acid sequence, 540 residues long: Chaperonin GroEL (540 aa).

ATP is bound by residues 29-32, 86-90, G413, 476-478, and D492; these read TIGP, DGTTT, and NAA.

The protein belongs to the chaperonin (HSP60) family. In terms of assembly, forms a cylinder of 14 subunits composed of two heptameric rings stacked back-to-back. Interacts with the co-chaperonin GroES.

Its subcellular location is the cytoplasm. The enzyme catalyses ATP + H2O + a folded polypeptide = ADP + phosphate + an unfolded polypeptide.. In terms of biological role, together with its co-chaperonin GroES, plays an essential role in assisting protein folding. The GroEL-GroES system forms a nano-cage that allows encapsulation of the non-native substrate proteins and provides a physical environment optimized to promote and accelerate protein folding. This Staphylococcus saprophyticus subsp. saprophyticus (strain ATCC 15305 / DSM 20229 / NCIMB 8711 / NCTC 7292 / S-41) protein is Chaperonin GroEL.